The following is a 92-amino-acid chain: UPF0473 protein BCE33L4129 (92 aa).

This sequence belongs to the UPF0473 family.

The sequence is that of UPF0473 protein BCE33L4129 from Bacillus cereus (strain ZK / E33L).